Here is a 529-residue protein sequence, read N- to C-terminus: hal-like protein DDB_G0273787/DDB_G0273081 (529 aa).

Residues 151–153 (ASG) constitute a cross-link (5-imidazolinone (Ala-Gly)). A 2,3-didehydroalanine (Ser) modification is found at S152.

Belongs to the PAL/histidase family. Contains an active site 4-methylidene-imidazol-5-one (MIO), which is formed autocatalytically by cyclization and dehydration of residues Ala-Ser-Gly.

The protein localises to the cytoplasm. It catalyses the reaction L-histidine = trans-urocanate + NH4(+). The protein operates within amino-acid degradation; L-histidine degradation into L-glutamate; N-formimidoyl-L-glutamate from L-histidine: step 1/3. This chain is hal-like protein DDB_G0273787/DDB_G0273081, found in Dictyostelium discoideum (Social amoeba).